The primary structure comprises 318 residues: Probable arabinan endo-1,5-alpha-L-arabinosidase C (318 aa).

An N-terminal signal peptide occupies residues M1–A28. The active-site Proton acceptor is the D30. N-linked (GlcNAc...) asparagine glycosylation is found at N72, N80, and N188. The Proton donor role is filled by E196. N277 carries N-linked (GlcNAc...) asparagine glycosylation.

It belongs to the glycosyl hydrolase 43 family.

The protein resides in the secreted. It carries out the reaction Endohydrolysis of (1-&gt;5)-alpha-arabinofuranosidic linkages in (1-&gt;5)-arabinans.. It participates in glycan metabolism; L-arabinan degradation. In terms of biological role, endo-1,5-alpha-L-arabinanase involved in degradation of pectin. Its preferred substrate is linear 1,5-alpha-L-arabinan. This Aspergillus niger (strain ATCC MYA-4892 / CBS 513.88 / FGSC A1513) protein is Probable arabinan endo-1,5-alpha-L-arabinosidase C (abnC).